The primary structure comprises 159 residues: 2-C-methyl-D-erythritol 2,4-cyclodiphosphate synthase (159 aa).

2 residues coordinate a divalent metal cation: D9 and H11. 4-CDP-2-C-methyl-D-erythritol 2-phosphate is bound by residues 9–11 (DVH) and 35–36 (HS). H43 contributes to the a divalent metal cation binding site. 4-CDP-2-C-methyl-D-erythritol 2-phosphate is bound by residues 57 to 59 (DIG), 62 to 66 (FPDTD), 133 to 136 (TTTE), F140, and R143.

It belongs to the IspF family. Homotrimer. The cofactor is a divalent metal cation.

It carries out the reaction 4-CDP-2-C-methyl-D-erythritol 2-phosphate = 2-C-methyl-D-erythritol 2,4-cyclic diphosphate + CMP. The protein operates within isoprenoid biosynthesis; isopentenyl diphosphate biosynthesis via DXP pathway; isopentenyl diphosphate from 1-deoxy-D-xylulose 5-phosphate: step 4/6. Involved in the biosynthesis of isopentenyl diphosphate (IPP) and dimethylallyl diphosphate (DMAPP), two major building blocks of isoprenoid compounds. Catalyzes the conversion of 4-diphosphocytidyl-2-C-methyl-D-erythritol 2-phosphate (CDP-ME2P) to 2-C-methyl-D-erythritol 2,4-cyclodiphosphate (ME-CPP) with a corresponding release of cytidine 5-monophosphate (CMP). This Mannheimia succiniciproducens (strain KCTC 0769BP / MBEL55E) protein is 2-C-methyl-D-erythritol 2,4-cyclodiphosphate synthase.